A 188-amino-acid chain; its full sequence is UPF0301 protein azo3459 (188 aa).

It belongs to the UPF0301 (AlgH) family.

The chain is UPF0301 protein azo3459 from Azoarcus sp. (strain BH72).